The primary structure comprises 117 residues: Phosphoribosyl-ATP pyrophosphatase (117 aa).

Residues 96–105 show a composition bias toward basic and acidic residues; it reads GVSGIEEKLS. Residues 96 to 117 form a disordered region; sequence GVSGIEEKLSRSQNQPEPTKAE. Polar residues predominate over residues 106–117; the sequence is RSQNQPEPTKAE.

The protein belongs to the PRA-PH family.

Its subcellular location is the cytoplasm. The enzyme catalyses 1-(5-phospho-beta-D-ribosyl)-ATP + H2O = 1-(5-phospho-beta-D-ribosyl)-5'-AMP + diphosphate + H(+). Its pathway is amino-acid biosynthesis; L-histidine biosynthesis; L-histidine from 5-phospho-alpha-D-ribose 1-diphosphate: step 2/9. The sequence is that of Phosphoribosyl-ATP pyrophosphatase from Nitrosomonas eutropha (strain DSM 101675 / C91 / Nm57).